The chain runs to 417 residues: MIELKNYTLNFGPQHPAAHGVLRLVLELEGETIVRADPHIGLLHRATEKLAETKPYIQSIGYMDRLDYVSMMCNEHAYVMAIEKLLGIEPPLRAKYIRTMFDEVTRILNHLLWLGATALDIGAMTVFLYCFREREDLFDCYEAVSGARMHATYYRPGGVARDLPDTMPQYKPSRWHSEREIEKKNHNRQGSLLDFLWDFTERFPHCVDEYETLLTDNRIWKQRTVDIGVVSPENALQWGFTGPMLRGSGIAWDLRKKQSYAAYDRVEFDIPVGKTGDCYDRYLVRVEELRQSNRIIRQCIEWLRKHPGPVKVDDYKVSPPRRVVMKHDMEALIHHFKLFTEGFCLPRGEVYSSVEAPKGEFGIYMVSDGANKPYRLKIRAPGFAHLSSFDDMVRGHMLADGVAILASQDIVFGEIDR.

This sequence belongs to the complex I 49 kDa subunit family. In terms of assembly, NDH-1 is composed of 14 different subunits. Subunits NuoB, C, D, E, F, and G constitute the peripheral sector of the complex.

The protein localises to the cell inner membrane. It carries out the reaction a quinone + NADH + 5 H(+)(in) = a quinol + NAD(+) + 4 H(+)(out). NDH-1 shuttles electrons from NADH, via FMN and iron-sulfur (Fe-S) centers, to quinones in the respiratory chain. The immediate electron acceptor for the enzyme in this species is believed to be ubiquinone. Couples the redox reaction to proton translocation (for every two electrons transferred, four hydrogen ions are translocated across the cytoplasmic membrane), and thus conserves the redox energy in a proton gradient. This chain is NADH-quinone oxidoreductase subunit D, found in Legionella pneumophila subsp. pneumophila (strain Philadelphia 1 / ATCC 33152 / DSM 7513).